A 33-amino-acid polypeptide reads, in one-letter code: SLLELGKMILQETGKMPSKSYGAYGCNCGVLGR.

It belongs to the phospholipase A2 family. Group II subfamily. K49 sub-subfamily. Homodimer; non-covalently linked. As to expression, expressed by the venom gland.

Its subcellular location is the secreted. In terms of biological role, snake phospholipase A2 homolog that lacks enzymatic activity. May display myotoxin activity. In isolated heart decreases cardiac frequency. Also decreases mean arterial pressure. Does not show antimicrobial activity. Does not change renal parameters (such as perfusion pressure, renal vascular resistance, urinary flow, glomerular filtration rate and sodium tubular transport). The sequence is that of Phospholipase A2 homolog BmarPLA2 from Bothrops marajoensis (Marajo lancehead).